Consider the following 296-residue polypeptide: 4-hydroxybenzoate octaprenyltransferase (296 aa).

8 consecutive transmembrane segments (helical) span residues 28–48 (PIGIYLLLWPTLWALWIAGKG), 52–72 (LINIVIFVLGVVLTRAGGCVI), 102–122 (ALVFFAVLMGISFLLVLLTNA), 146–166 (YYPQVVLGAAFSWGMPMAFTA), 169–189 (GDLPATAWLLYIANLLWTVGY), 219–239 (VIILTLQGLSLVCLLLAGARF), 241–261 (LGGWFHLGLLAAAGCFAWEFW), and 275–295 (FLHNHWAGLAIFVGIVADYAF).

It belongs to the UbiA prenyltransferase family. The cofactor is Mg(2+).

It is found in the cell inner membrane. The catalysed reaction is all-trans-octaprenyl diphosphate + 4-hydroxybenzoate = 4-hydroxy-3-(all-trans-octaprenyl)benzoate + diphosphate. It functions in the pathway cofactor biosynthesis; ubiquinone biosynthesis. Its function is as follows. Catalyzes the prenylation of para-hydroxybenzoate (PHB) with an all-trans polyprenyl group. Mediates the second step in the final reaction sequence of ubiquinone-8 (UQ-8) biosynthesis, which is the condensation of the polyisoprenoid side chain with PHB, generating the first membrane-bound Q intermediate 3-octaprenyl-4-hydroxybenzoate. The chain is 4-hydroxybenzoate octaprenyltransferase from Pseudomonas fluorescens (strain SBW25).